The following is a 394-amino-acid chain: Class II hydrophobin TH1 (394 aa).

The N-terminal stretch at 1–16 (MKFLAAASLLVASTLA) is a signal peptide. Positions 17-42 (VPTSSGGSCRPRPPPGGGNGGNGGNG) are disordered. Gly residues predominate over residues 33-42 (GGNGGNGGNG). A hydrophobin 1 region spans residues 48 to 117 (GYQPCPAGLY…GQAVLCQDSI (70 aa)). Disulfide bonds link cysteine 52–cysteine 101, cysteine 62–cysteine 92, cysteine 63–cysteine 75, and cysteine 102–cysteine 113. The interval 135–157 (GNGGNNGGNTDYPGGNGGNNGGN) is disordered. Residues 148–157 (GGNGGNNGGN) show a composition bias toward gly residues. Hydrophobin stretches follow at residues 200-270 (GYQA…QPAI) and 326-394 (GSFK…CTGA).

Belongs to the cerato-ulmin hydrophobin family. As to quaternary structure, homotetramer. Further self-assembles to form highly ordered films at water-air interfaces through intermolecular interactions. Post-translationally, several N-termini starting at positions 17, 20, 22, 28 and 48 have been identified by direct sequencing. In terms of processing, contains a number of intrachain disulfide bonds. Not glycosylated.

The protein localises to the secreted. It is found in the cell wall. In terms of biological role, aerial growth, conidiation, and dispersal of filamentous fungi in the environment rely upon a capability of their secreting small amphipathic proteins called hydrophobins (HPBs) with low sequence identity. Class I can self-assemble into an outermost layer of rodlet bundles on aerial cell surfaces, conferring cellular hydrophobicity that supports fungal growth, development and dispersal; whereas Class II form highly ordered films at water-air interfaces through intermolecular interactions but contribute nothing to the rodlet structure. TH1 is a class II hydrophobin that reduces water surface tension dramatically upon assembly at the water-air interface and plays a role in the formation of aerial hyphae. The chain is Class II hydrophobin TH1 (TH1) from Claviceps fusiformis (Ergot fungus).